We begin with the raw amino-acid sequence, 742 residues long: Potassium transporter 19 (742 aa).

Topologically, residues 1–46 are cytoplasmic; sequence MSVQEDGAARPEPDVLRRHDSLYGDAEKVSNNKRHGAGGSWARTLQ. The helical transmembrane segment at 47–67 threads the bilayer; sequence LAFQSIGVVYGDVGTSPLYVY. The Extracellular portion of the chain corresponds to 68-83; it reads SSTFPNGIKHPDDLVG. A helical transmembrane segment spans residues 84–104; the sequence is VLSLILYTLILIPMVKYVFIV. Residues 105 to 170 lie on the Cytoplasmic side of the membrane; it reads LYANDNGDGG…QKLESSNAAK (66 aa). The helical transmembrane segment at 171–191 threads the bilayer; the sequence is IALFTITILGTSMVMGDGTLT. Over 192 to 206 the chain is Extracellular; it reads PAISVLSAVSGIREK. Residues 207 to 227 traverse the membrane as a helical segment; that stretch reads APNLTQSQVVWISVAILFVLF. The Cytoplasmic portion of the chain corresponds to 228–236; it reads SMQRFGTDK. A helical membrane pass occupies residues 237–257; the sequence is VGYTFAPVISVWFLLIAGIGM. Residues 258-287 are Extracellular-facing; it reads YNLTVHEITILRAFNPKYIVDYFRRNGKEA. N259 carries N-linked (GlcNAc...) asparagine glycosylation. Residues 288 to 308 form a helical membrane-spanning segment; that stretch reads WVSLGGVVLCITGTEAMFADL. At 309-317 the chain is on the cytoplasmic side; it reads GHFNIRAIQ. A helical membrane pass occupies residues 318 to 338; sequence LSFTCVLFPSVALCYMGQAAY. At 339-352 the chain is on the extracellular side; that stretch reads LRKFPENVGDTFYR. A helical membrane pass occupies residues 353–373; sequence SIPAPLFWPVFVVAIMGAIIA. Residues 374–409 lie on the Cytoplasmic side of the membrane; it reads SQAMLSGAFAILSKALSLGCFPRVEVVHTSNKYEGQ. The chain crosses the membrane as a helical span at residues 410 to 430; sequence VYIPEVNFLIGAASVAVTLAF. The Extracellular segment spans residues 431-441; the sequence is QTTANIGNAYG. A helical membrane pass occupies residues 442 to 462; it reads ICVVTVFSITTHLMTVVMLLI. The Cytoplasmic segment spans residues 463–468; that stretch reads WKVRLP. The chain crosses the membrane as a helical span at residues 469–489; the sequence is FIAAFYAAFGLAEFLYLSSIL. Over 490–495 the chain is Extracellular; it reads SKFAEG. A helical transmembrane segment spans residues 496–516; that stretch reads GYLPFCFSLVLMALMATWHYV. Topologically, residues 517–742 are cytoplasmic; that stretch reads HVKRYWYELD…LLKVGITYEI (226 aa).

This sequence belongs to the HAK/KUP transporter (TC 2.A.72.3) family.

It is found in the membrane. Its function is as follows. High-affinity potassium transporter. This Oryza sativa subsp. japonica (Rice) protein is Potassium transporter 19 (HAK19).